Consider the following 308-residue polypeptide: Follistatin-related protein 1 (308 aa).

An N-terminal signal peptide occupies residues 1–20 (MWKRWLALALALVAVAWVRA). In terms of domain architecture, Follistatin-like spans 30 to 53 (ICANVFCGAGRECAVTEKGEPTCL). Disulfide bonds link Cys-31–Cys-42, Cys-36–Cys-52, Cys-54–Cys-84, Cys-58–Cys-77, and Cys-66–Cys-98. A Kazal-like domain is found at 48 to 100 (GEPTCLCIEQCKPHKRPVCGSNGKTYLNHCELHRDACLTGSKIQVDYDGHCKE). The N-linked (GlcNAc...) asparagine glycan is linked to Asn-144. One can recognise an EF-hand 1 domain in the interval 144–178 (NYSEILDKYFKNFDNGDSRLDSSEFLKFVEQNETA). At Ser-165 the chain carries Phosphoserine. Residues Asn-175 and Asn-180 are each glycosylated (N-linked (GlcNAc...) asparagine). An EF-hand 2 domain is found at 193–228 (LRGLCVDALIELSDENADWKLSFQEFLKCLNPSFNP). Positions 233 to 287 (CALEDETYADGAETEVDCNRCVCACGNWVCTAMTCDGKNQKGAQTQTEEEMTRYV) constitute a VWFC domain.

As to quaternary structure, homodimer. Interacts with SCN10A. Interacts with DIP2A; DIP2A may act as a cell surface receptor for FSTL1. Interacts with BMP4. Interacts with CD14; this interaction promotes TL4-mediated signaling cascade.

The protein localises to the secreted. Its function is as follows. Secreted glycoprotein that is involved in various physiological processes, such as angiogenesis, regulation of the immune response, cell proliferation and differentiation. Plays a role in the development of the central nervous system, skeletal system, lungs, and ureter. Promotes endothelial cell survival, migration and differentiation into network structures in an AKT-dependent manner. Also promotes survival of cardiac myocytes. Initiates various signaling cascades by activating different receptors on the cell surface such as DIP2A, TLR4 or BMP receptors. The sequence is that of Follistatin-related protein 1 (FSTL1) from Macaca fascicularis (Crab-eating macaque).